The following is a 496-amino-acid chain: Protein RepS (496 aa).

Residues 120 to 141 (SDILTTAIDLGFMPTLIIKSDK) mediate DNA binding.

Functionally, essential for replication. This is Protein RepS (repS) from Streptococcus pyogenes.